Reading from the N-terminus, the 698-residue chain is Probable microcin-H47 secretion/processing ATP-binding protein MchF (698 aa).

The Peptidase C39 domain maps to 26-145 (QTETAECGLA…RYFTGIALEV (120 aa)). C32 is an active-site residue. A run of 5 helical transmembrane segments spans residues 33 to 53 (GLACLAMICGHFGKNIDLISL), 90 to 110 (LGALKMPCILHWDFSHFVVLV), 289 to 311 (TCVVGAIMDSIMVVGVFVMMLLY), 315 to 337 (LTWIVLGFTMVYVLIRLVTYGYY), and 397 to 417 (LLFGGINTFVAACDQVAILWL). One can recognise an ABC transmembrane type-1 domain in the interval 176–458 (LAKIFCLSVV…LTSFLLQLRI (283 aa)). Residues 492 to 698 (LETTDLSYRY…LRTVDRIISI (207 aa)) enclose the ABC transporter domain. 526 to 533 (GASGAGKT) contacts ATP.

This sequence belongs to the ABC transporter superfamily.

Its subcellular location is the cell membrane. In terms of biological role, probably involved, in conjunction with MchE, in the secretion of microcin H47. The chain is Probable microcin-H47 secretion/processing ATP-binding protein MchF (mchF) from Escherichia coli.